The primary structure comprises 130 residues: Large ribosomal subunit protein eL32 (130 aa).

Serine 40 bears the Phosphoserine mark.

It belongs to the eukaryotic ribosomal protein eL32 family. In terms of assembly, component of the large ribosomal subunit (LSU). Mature yeast ribosomes consist of a small (40S) and a large (60S) subunit. The 40S small subunit contains 1 molecule of ribosomal RNA (18S rRNA) and 33 different proteins (encoded by 57 genes). The large 60S subunit contains 3 rRNA molecules (25S, 5.8S and 5S rRNA) and 46 different proteins (encoded by 81 genes).

It is found in the cytoplasm. Its function is as follows. Component of the ribosome, a large ribonucleoprotein complex responsible for the synthesis of proteins in the cell. The small ribosomal subunit (SSU) binds messenger RNAs (mRNAs) and translates the encoded message by selecting cognate aminoacyl-transfer RNA (tRNA) molecules. The large subunit (LSU) contains the ribosomal catalytic site termed the peptidyl transferase center (PTC), which catalyzes the formation of peptide bonds, thereby polymerizing the amino acids delivered by tRNAs into a polypeptide chain. The nascent polypeptides leave the ribosome through a tunnel in the LSU and interact with protein factors that function in enzymatic processing, targeting, and the membrane insertion of nascent chains at the exit of the ribosomal tunnel. This chain is Large ribosomal subunit protein eL32, found in Saccharomyces cerevisiae (strain ATCC 204508 / S288c) (Baker's yeast).